The primary structure comprises 320 residues: Mitochondrial thiamine pyrophosphate carrier (320 aa).

Solcar repeat units follow at residues 13–106, 116–202, and 214–309; these read NTKF…LTEL, REFS…LKHL, and NENL…FCNV. A helical membrane pass occupies residues 19-39; it reads AVAGSVSGLVTRALISPFDVI. The residue at position 51 (S51) is a Phosphoserine. The next 4 helical transmembrane spans lie at 87–107, 122–142, 173–193, and 220–240; these read ILSI…TELV, FVCG…VDVL, VFYK…GLQF, and LLCG…LDLF. The short motif at 241–246 is the Substrate recognition element; the sequence is KKRLQV. The helical transmembrane segment at 293 to 313 threads the bilayer; that stretch reads ALSTGFMFFWYEFFCNVFHCM.

The protein belongs to the mitochondrial carrier (TC 2.A.29) family.

The protein resides in the mitochondrion membrane. It catalyses the reaction thiamine phosphate(out) + thiamine diphosphate(in) = thiamine phosphate(in) + thiamine diphosphate(out). In terms of biological role, mitochondrial transporter mediating uptake of thiamine diphosphate into mitochondria. It is not clear if the antiporter activity is affected by the membrane potential or by the proton electrochemical gradient. This is Mitochondrial thiamine pyrophosphate carrier (SLC25A19) from Pongo abelii (Sumatran orangutan).